Reading from the N-terminus, the 821-residue chain is Pentatricopeptide repeat-containing protein At4g04790, mitochondrial (821 aa).

Residues 1–74 (MVVSKVNKSL…KLLHVTTSDK (74 aa)) constitute a mitochondrion transit peptide. 7 PPR repeats span residues 372-406 (SSTS…GLMI), 407-441 (SADI…SVKP), 442-476 (NTEN…NLEP), 477-511 (NSSM…GVKP), 512-542 (DSIT…AGVQ), 544-574 (TKRI…PDVP), and 578-612 (QNEL…ECHV). The tract at residues 801–821 (AFSQAPNKKKPKKKMIVLSTK) is disordered.

Belongs to the PPR family. P subfamily.

It is found in the mitochondrion. The polypeptide is Pentatricopeptide repeat-containing protein At4g04790, mitochondrial (Arabidopsis thaliana (Mouse-ear cress)).